The primary structure comprises 500 residues: Glycerol kinase (500 aa).

An ADP-binding site is contributed by Thr-11. Thr-11, Thr-12, and Ser-13 together coordinate ATP. Thr-11 serves as a coordination point for sn-glycerol 3-phosphate. Arg-15 serves as a coordination point for ADP. Sn-glycerol 3-phosphate is bound by residues Arg-81, Glu-82, Tyr-133, and Asp-242. Glycerol-binding residues include Arg-81, Glu-82, Tyr-133, Asp-242, and Gln-243. Positions 264 and 307 each coordinate ADP. Thr-264, Gly-307, Gln-311, and Gly-411 together coordinate ATP. Gly-411 is a binding site for ADP.

The protein belongs to the FGGY kinase family.

The enzyme catalyses glycerol + ATP = sn-glycerol 3-phosphate + ADP + H(+). The protein operates within polyol metabolism; glycerol degradation via glycerol kinase pathway; sn-glycerol 3-phosphate from glycerol: step 1/1. With respect to regulation, inhibited by fructose 1,6-bisphosphate (FBP). Its function is as follows. Key enzyme in the regulation of glycerol uptake and metabolism. Catalyzes the phosphorylation of glycerol to yield sn-glycerol 3-phosphate. The polypeptide is Glycerol kinase (Bradyrhizobium diazoefficiens (strain JCM 10833 / BCRC 13528 / IAM 13628 / NBRC 14792 / USDA 110)).